Reading from the N-terminus, the 349-residue chain is Nuclear distribution protein nudE homolog 1-B (349 aa).

Positions 22–189 (VAMKYKQCSE…ELAVQQKQEK (168 aa)) form a coiled coil.

It belongs to the nudE family. In terms of assembly, self-associates. Interacts with pafah1b1. Phosphorylated in mitosis.

The protein resides in the cytoplasm. It is found in the cytoskeleton. The protein localises to the microtubule organizing center. Its subcellular location is the centrosome. It localises to the spindle. The protein resides in the chromosome. It is found in the centromere. The protein localises to the kinetochore. Its subcellular location is the cleavage furrow. It localises to the cytoplasmic vesicle membrane. Functionally, required for centrosome duplication and formation and function of the mitotic spindle. This is Nuclear distribution protein nudE homolog 1-B (nde1-b) from Xenopus laevis (African clawed frog).